A 227-amino-acid polypeptide reads, in one-letter code: MAYPFQLGLQDATSPIMEELTNFHDHTLMIVFLISSLVLYLISLMLTTKLIHTNTMDAQEVETVWTILPAIILIMIALPSLRILYLMDEINNPVLTVKTMGHQWYWSYEYTDYEDLCFDSYMTPTNELKPGELRLLEVDNRVVLPMELPIRMLISSEDVLHSWAVPSLGLKTDAIPGRLNQATITSNRPGVFYGQCSEICGSNHSFMPIVLEMIPLKLFENWSTSMI.

The Mitochondrial intermembrane portion of the chain corresponds to 1–14 (MAYPFQLGLQDATS). The helical transmembrane segment at 15–45 (PIMEELTNFHDHTLMIVFLISSLVLYLISLM) threads the bilayer. Topologically, residues 46–59 (LTTKLIHTNTMDAQ) are mitochondrial matrix. Residues 60 to 87 (EVETVWTILPAIILIMIALPSLRILYLM) form a helical membrane-spanning segment. The Mitochondrial intermembrane portion of the chain corresponds to 88 to 227 (DEINNPVLTV…LFENWSTSMI (140 aa)). 6 residues coordinate Cu cation: His-161, Cys-196, Glu-198, Cys-200, His-204, and Met-207. Mg(2+) is bound at residue Glu-198.

Belongs to the cytochrome c oxidase subunit 2 family. As to quaternary structure, component of the cytochrome c oxidase (complex IV, CIV), a multisubunit enzyme composed of 14 subunits. The complex is composed of a catalytic core of 3 subunits MT-CO1, MT-CO2 and MT-CO3, encoded in the mitochondrial DNA, and 11 supernumerary subunits COX4I, COX5A, COX5B, COX6A, COX6B, COX6C, COX7A, COX7B, COX7C, COX8 and NDUFA4, which are encoded in the nuclear genome. The complex exists as a monomer or a dimer and forms supercomplexes (SCs) in the inner mitochondrial membrane with NADH-ubiquinone oxidoreductase (complex I, CI) and ubiquinol-cytochrome c oxidoreductase (cytochrome b-c1 complex, complex III, CIII), resulting in different assemblies (supercomplex SCI(1)III(2)IV(1) and megacomplex MCI(2)III(2)IV(2)). Found in a complex with TMEM177, COA6, COX18, COX20, SCO1 and SCO2. Interacts with TMEM177 in a COX20-dependent manner. Interacts with COX20. Interacts with COX16. It depends on Cu cation as a cofactor.

It localises to the mitochondrion inner membrane. It catalyses the reaction 4 Fe(II)-[cytochrome c] + O2 + 8 H(+)(in) = 4 Fe(III)-[cytochrome c] + 2 H2O + 4 H(+)(out). In terms of biological role, component of the cytochrome c oxidase, the last enzyme in the mitochondrial electron transport chain which drives oxidative phosphorylation. The respiratory chain contains 3 multisubunit complexes succinate dehydrogenase (complex II, CII), ubiquinol-cytochrome c oxidoreductase (cytochrome b-c1 complex, complex III, CIII) and cytochrome c oxidase (complex IV, CIV), that cooperate to transfer electrons derived from NADH and succinate to molecular oxygen, creating an electrochemical gradient over the inner membrane that drives transmembrane transport and the ATP synthase. Cytochrome c oxidase is the component of the respiratory chain that catalyzes the reduction of oxygen to water. Electrons originating from reduced cytochrome c in the intermembrane space (IMS) are transferred via the dinuclear copper A center (CU(A)) of subunit 2 and heme A of subunit 1 to the active site in subunit 1, a binuclear center (BNC) formed by heme A3 and copper B (CU(B)). The BNC reduces molecular oxygen to 2 water molecules using 4 electrons from cytochrome c in the IMS and 4 protons from the mitochondrial matrix. The protein is Cytochrome c oxidase subunit 2 (MT-CO2) of Gerbillurus vallinus (Brush-tailed hairy-footed gerbil).